Reading from the N-terminus, the 130-residue chain is Small ribosomal subunit protein uS9 (130 aa).

It belongs to the universal ribosomal protein uS9 family.

In Bacillus velezensis (strain DSM 23117 / BGSC 10A6 / LMG 26770 / FZB42) (Bacillus amyloliquefaciens subsp. plantarum), this protein is Small ribosomal subunit protein uS9.